The sequence spans 538 residues: MKRPKLKKASKRMTCHKRYKIQKKVREHHRKLRKEAKKRGHKKPRKDPGVPNSAPFKEALLREAELRKQQLEELKQQQKLDRQKEQERKRKLEVSPGDEQSNVETREESDEPKRKKAKAGKQNPKKLHCQELKKVIEASDIVLEVLDARDPLGCRCPQIEEAVIQSGSKKLILVLNKSDLVPKENLENWLNYLNKELPTVVFKASTNLKNRKTFKIKKKKVVPFQSKICCGKEALWKLLGDFQQSCGKDIQVGVIGFPNVGKSSVINSLKQEWICNVGISMGLTRSMQIVPLDKQITIIDSPCLIISPCNSPTALALRSPASIEELRPLEAASAILSQADNEQVVLKYTVPEYKDSLHFFTKLAQRRGLHQKGGSPNVESAAKLVWSEWTGASLGYYCHPPASWNHSLHFNENIAAVMKKGFNLEELEKNNAHSIQVLKGPHLTNRILFRSSGLTNGILDEKDIVEESPRQTEDKQDADDQENGSGERNAEISDVAPVEETRELSPEQSTAGKPSDGSSALDRASQEDETYDFTTDYI.

Residues 1–45 (MKRPKLKKASKRMTCHKRYKIQKKVREHHRKLRKEAKKRGHKKPR) are compositionally biased toward basic residues. Disordered regions lie at residues 1–57 (MKRP…APFK) and 69–126 (QQLE…NPKK). A basic region spans residues 2 to 46 (KRPKLKKASKRMTCHKRYKIQKKVREHHRKLRKEAKKRGHKKPRK). The stretch at 54–95 (APFKEALLREAELRKQQLEELKQQQKLDRQKEQERKRKLEVS) forms a coiled coil. The span at 69 to 93 (QQLEELKQQQKLDRQKEQERKRKLE) shows a compositional bias: basic and acidic residues. Position 79 is an N6-acetyllysine (lysine 79). Lysine 91 participates in a covalent cross-link: Glycyl lysine isopeptide (Lys-Gly) (interchain with G-Cter in SUMO2). Serine 95 and serine 101 each carry phosphoserine. Over residues 114–126 (RKKAKAGKQNPKK) the composition is skewed to basic residues. In terms of domain architecture, CP-type G spans 129-307 (CQELKKVIEA…IIDSPCLIIS (179 aa)). GTP is bound at residue 176–179 (NKSD). Residues lysine 177, lysine 248, lysine 262, and lysine 270 each participate in a glycyl lysine isopeptide (Lys-Gly) (interchain with G-Cter in SUMO2) cross-link. Residue 256-263 (GFPNVGKS) participates in GTP binding. Residues 277–451 (VGISMGLTRS…HLTNRILFRS (175 aa)) are intermediate. Position 300-303 (300-303 (DSPC)) interacts with GTP. Residues 460–475 (DEKDIVEESPRQTEDK) show a composition bias toward basic and acidic residues. Residues 460–532 (DEKDIVEESP…RASQEDETYD (73 aa)) form an acidic region. The interval 460-538 (DEKDIVEESP…ETYDFTTDYI (79 aa)) is disordered. Residues serine 493, serine 505, and serine 518 each carry the phosphoserine modification. The segment covering 506 to 518 (PEQSTAGKPSDGS) has biased composition (polar residues).

This sequence belongs to the TRAFAC class YlqF/YawG GTPase family. As to quaternary structure, interacts with MDM2; this interaction stabilizes MDM2. Interaction with MDM2 occurs in the nucleoplasm and is triggered by a nucleolar release mechanism, such as mitosis-induced nucleolar disassembly. Indirectly interacts with TP53, via MDM2-binding. Interacts with TSC22D1 isoform 2. As to expression, expressed in the adult bone marrow population that is enriched in hematopoietic stem cells.

Its subcellular location is the nucleus. The protein localises to the nucleolus. May be required to maintain the proliferative capacity of stem cells. Stabilizes MDM2 by preventing its ubiquitination, and hence proteasomal degradation. The polypeptide is Guanine nucleotide-binding protein-like 3 (Gnl3) (Mus musculus (Mouse)).